A 180-amino-acid chain; its full sequence is Putative methyltransferase YrhH (180 aa).

It belongs to the methyltransferase superfamily.

The sequence is that of Putative methyltransferase YrhH (yrhH) from Bacillus subtilis (strain 168).